Reading from the N-terminus, the 394-residue chain is GDSL esterase/lipase At1g31550 (394 aa).

A signal peptide spans 1–27 (MASLDSHVLMKLGSLFLSTLFVSIVSS). The active-site Nucleophile is serine 43. N-linked (GlcNAc...) asparagine glycans are attached at residues asparagine 138, asparagine 290, and asparagine 322. Residues aspartate 345 and histidine 348 contribute to the active site.

The protein belongs to the 'GDSL' lipolytic enzyme family.

The protein resides in the secreted. This is GDSL esterase/lipase At1g31550 from Arabidopsis thaliana (Mouse-ear cress).